The chain runs to 560 residues: uncharacterized protein (560 aa).

Transmembrane regions (helical) follow at residues 9–29 (LVIT…SFLL), 61–81 (ILVP…KYKI), 136–156 (IGIA…ASMM), 305–325 (SLQI…ASFI), and 442–462 (VVLE…TNFY).

The protein resides in the membrane. This is an uncharacterized protein from Saccharomyces cerevisiae (strain ATCC 204508 / S288c) (Baker's yeast).